We begin with the raw amino-acid sequence, 33 residues long: Mu/delta-theraphotoxin-Pm2a (33 aa).

3 disulfide bridges follow: C2-C16, C9-C21, and C15-C27. A Phenylalanine amide modification is found at F33.

In terms of tissue distribution, expressed by the venom gland.

It is found in the secreted. In terms of biological role, gating-modifier toxin with very weak activity on Nav1.7/SCN9A and Nav1.8/SCN10A. Shows 22% peak current inhibition (at 10 uM) on Nav1.8/SCN10A sodium channels. Show peak current inhibition and delays fast inactivation on Nav1.7/SCN9A (EC(50)&gt;10 uM). This is Mu/delta-theraphotoxin-Pm2a from Poecilotheria metallica (Metallic blue ornamental tree spider).